The sequence spans 550 residues: Aldehyde dehydrogenase family 3 member I1, chloroplastic (550 aa).

The N-terminal 59 residues, 1-59 (MTKLLEINHIQTLCFAKGFSPARLNVATSPFRISRRGGGGYCSNACIPYRLKFTCYATL), are a transit peptide targeting the chloroplast. Residue 259–264 (GGARVA) coordinates NAD(+). Glu-281 serves as the catalytic Proton acceptor. The active-site Nucleophile is the Cys-316.

The protein belongs to the aldehyde dehydrogenase family. Homodimer and homomultimer.

The protein resides in the plastid. The protein localises to the chloroplast. The enzyme catalyses an aldehyde + NAD(+) + H2O = a carboxylate + NADH + 2 H(+). Thiol-based regulation. Inactivation after dimerization under oxidizing conditions. Involved in oxidative stress tolerance by detoxifying reactive aldehydes derived from lipid peroxidation. Medium- to long-chain saturated aldehydes are preferred substrates, while the short-chain aldehyde propanal is a weak substrate. Can use both NAD(+) and NADP(+), but the coenzyme preference is substrate dependent. The polypeptide is Aldehyde dehydrogenase family 3 member I1, chloroplastic (ALDH3I1) (Arabidopsis thaliana (Mouse-ear cress)).